The following is a 184-amino-acid chain: MLIILKENIRTLGKLGEVVKVKPGYARNFLFPQRKAVKATKENLTKLEEQRLLLEEENIKRLNVAKELALSLHDKFVVLIKQASEDGKIFGSVTTREIAKILLQEGHVIDHRSLSFGGISIKNLGEYQVNVELHSEVVVPITIYVVKSETDANELRQVKLQNQKSEQQEAEQDANKEAADGDDS.

The interval 160–184 (LQNQKSEQQEAEQDANKEAADGDDS) is disordered. The span at 173-184 (DANKEAADGDDS) shows a compositional bias: basic and acidic residues.

It belongs to the bacterial ribosomal protein bL9 family.

Functionally, binds to the 23S rRNA. The chain is Large ribosomal subunit protein bL9 from Wolbachia sp. subsp. Drosophila simulans (strain wRi).